The primary structure comprises 57 residues: DNA gyrase inhibitor YacG (57 aa).

Residues cysteine 10, cysteine 13, cysteine 25, and cysteine 29 each contribute to the Zn(2+) site.

Belongs to the DNA gyrase inhibitor YacG family. Interacts with GyrB. It depends on Zn(2+) as a cofactor.

Functionally, inhibits all the catalytic activities of DNA gyrase by preventing its interaction with DNA. Acts by binding directly to the C-terminal domain of GyrB, which probably disrupts DNA binding by the gyrase. The protein is DNA gyrase inhibitor YacG of Brucella melitensis biotype 1 (strain ATCC 23456 / CCUG 17765 / NCTC 10094 / 16M).